The primary structure comprises 370 residues: Alpha-ketoglutarate-dependent xanthine dioxygenase xanA (370 aa).

Histidine 107 contributes to the substrate binding site. Fe cation contacts are provided by histidine 149 and aspartate 151. 2-oxoglutarate contacts are provided by threonine 195 and tryptophan 325. Histidine 340 contacts Fe cation. Position 352 (arginine 352) interacts with 2-oxoglutarate.

This sequence belongs to the TfdA dioxygenase family. It depends on Fe(2+) as a cofactor. In terms of processing, glycosylated. Is subject to both N- and O-linked glycosylation. Phosphorylated.

The protein resides in the cytoplasm. Its subcellular location is the cytosol. The enzyme catalyses xanthine + 2-oxoglutarate + O2 = urate + succinate + CO2. With respect to regulation, cu(2+) and Zn(2+) completely inhibit the xanthine dioxygenase activity, whereas Co(2+), Mn(2+), and Ni(2+) partially inhibit the activity. The inactive metal ions are presumed to compete for the Fe(2+)-binding site. N-oxalylglycine (NOG), a known inhibitor of several Fe(2+)/alpha-ketoglutarate-dependent dioxygenase family members, competes with alpha-ketoglutarate and provides a Ki of 0.12 uM for inhibition. 6,8-dihydroxypurine acts as a slow-binding competitive inhibitor. The thiol-specific inhibitors 5,5'-dithiobis(2-nitrobenzoic acid) (DTNB) and iodoacetamide, inhibit also the catalytic activity. Functionally, alpha-ketoglutarate-dependent xanthine dioxygenase is a non-heme mononuclear Fe(2+) enzyme that decarboxylates alpha-ketoglutarate to succinate and CO(2) while hydroxylating xanthine to generate uric acid. Allows xanthine utilization as a nitrogen source. Whereas xanA is highly specific for xanthine, alpha-ketoadipic acid can replace alpha-ketoglutarate as a cosubstrate. Exhibits ferroxidase activity in the absence of substrates. This chain is Alpha-ketoglutarate-dependent xanthine dioxygenase xanA, found in Emericella nidulans (Aspergillus nidulans).